We begin with the raw amino-acid sequence, 405 residues long: Peroxisomal membrane protein PEX13 (405 aa).

The segment covering 1 to 11 (MASQPPPPPKP) has biased composition (pro residues). Positions 1–71 (MASQPPPPPK…SQQTGSNNVN (71 aa)) are disordered. At 1–136 (MASQPPPPPK…SSRGAFQSIE (136 aa)) the chain is on the peroxisomal matrix side. The span at 61 to 71 (PSQQTGSNNVN) shows a compositional bias: polar residues. Residues 137-157 (SIVHAFASVSMMMDATFSAVY) form a helical membrane-spanning segment. The interval 147–235 (MMMDATFSAV…EDQATNSAKS (89 aa)) is targeting to peroxisomes. At 158 to 176 (NSFRAVLDVANHFSRLKIH) the chain is on the cytoplasmic side. Residues 177–194 (FTKVFSAFALVRTIRYLY) form a helical membrane-spanning segment. Residues 177–198 (FTKVFSAFALVRTIRYLYRRLQ) are interaction with PEX19. Residues 195–235 (RRLQWMMGLRRGSENEDLWAESEGTVACLSAEDQATNSAKS) are Peroxisomal matrix-facing. Residues 236-256 (WPIFLFFAVILGGPYLIWKLL) traverse the membrane as a helical segment. At 257–405 (STHNDEVTDN…TGKNGDKQDL (149 aa)) the chain is on the cytoplasmic side. The region spanning 274–338 (DDHVVARAEY…PANYVKILGK (65 aa)) is the SH3 domain. Residue S356 is modified to Phosphoserine.

Belongs to the peroxin-13 family. Interacts (via SH3 domain) with PEX14 (via SH3-binding motif); forming the PEX13-PEX14 docking complex. Interacts with PEX19.

Its subcellular location is the peroxisome membrane. Functionally, component of the PEX13-PEX14 docking complex, a translocon channel that specifically mediates the import of peroxisomal cargo proteins bound to PEX5 receptor. The PEX13-PEX14 docking complex forms a large import pore which can be opened to a diameter of about 9 nm. Mechanistically, PEX5 receptor along with cargo proteins associates with the PEX14 subunit of the PEX13-PEX14 docking complex in the cytosol, leading to the insertion of the receptor into the organelle membrane with the concomitant translocation of the cargo into the peroxisome matrix. Involved in the import of PTS1- and PTS2-type containing proteins. The chain is Peroxisomal membrane protein PEX13 from Mus musculus (Mouse).